Consider the following 123-residue polypeptide: Ribosome-binding factor A (123 aa).

It belongs to the RbfA family. In terms of assembly, monomer. Binds 30S ribosomal subunits, but not 50S ribosomal subunits or 70S ribosomes.

It localises to the cytoplasm. Functionally, one of several proteins that assist in the late maturation steps of the functional core of the 30S ribosomal subunit. Associates with free 30S ribosomal subunits (but not with 30S subunits that are part of 70S ribosomes or polysomes). Required for efficient processing of 16S rRNA. May interact with the 5'-terminal helix region of 16S rRNA. The sequence is that of Ribosome-binding factor A from Legionella pneumophila (strain Paris).